The primary structure comprises 426 residues: Dihydropyrimidine dehydrogenase (NADP(+)), chloroplastic (426 aa).

The N-terminal 44 residues, 1–44 (MASMSFALNRFSGLSSKTTLSADFDPSSRRSFLPPTRVGLKISS), are a transit peptide targeting the chloroplast. A45 carries the post-translational modification N-acetylalanine. Substrate-binding positions include N129 and 188 to 190 (NFS). C191 (nucleophile) is an active-site residue. 256 to 257 (NT) lines the substrate pocket. The segment at 395–414 (VEQRKAEKRGLKSDKDWTGD) is disordered.

This sequence belongs to the dihydropyrimidine dehydrogenase family. As to expression, expressed in roots, leaves, stems, siliques and flowers. Highly expressed ion dry seeds.

It localises to the plastid. The protein localises to the chloroplast. The catalysed reaction is 5,6-dihydrouracil + NADP(+) = uracil + NADPH + H(+). It participates in amino-acid biosynthesis; beta-alanine biosynthesis. Involved in pyrimidine base degradation. Catalyzes the reduction of uracil to 5,6-dihydrouracil (DHU) by using NADH as a specific cosubstrate and the reduction of thymine to 5,6-dihydrothymine (DHT). Involved in the recycling of nitrogen from nucleobases to general nitrogen metabolism. The protein is Dihydropyrimidine dehydrogenase (NADP(+)), chloroplastic of Arabidopsis thaliana (Mouse-ear cress).